The following is a 418-amino-acid chain: UDP-N-acetylglucosamine 1-carboxyvinyltransferase (418 aa).

22–23 contacts phosphoenolpyruvate; the sequence is KN. Position 92 (R92) interacts with UDP-N-acetyl-alpha-D-glucosamine. C116 serves as the catalytic Proton donor. 2-(S-cysteinyl)pyruvic acid O-phosphothioketal is present on C116. Residues D305 and I327 each contribute to the UDP-N-acetyl-alpha-D-glucosamine site.

Belongs to the EPSP synthase family. MurA subfamily.

It is found in the cytoplasm. The enzyme catalyses phosphoenolpyruvate + UDP-N-acetyl-alpha-D-glucosamine = UDP-N-acetyl-3-O-(1-carboxyvinyl)-alpha-D-glucosamine + phosphate. The protein operates within cell wall biogenesis; peptidoglycan biosynthesis. Cell wall formation. Adds enolpyruvyl to UDP-N-acetylglucosamine. This is UDP-N-acetylglucosamine 1-carboxyvinyltransferase from Gluconobacter oxydans (strain 621H) (Gluconobacter suboxydans).